A 325-amino-acid polypeptide reads, in one-letter code: MIDFANFYQLIAKNRLSHWLHTLPAQLHAWQHDNQHGDLPRWNRALNKLPQVAPGHIELHSRVEIGSAESLGEGERKKVESLLRHFMPWRKGPFTVHGIHIDTEWRSDWKWDRVLPHISPLAGRYVLDVGCGSGYHLWRMVGEGAKLAVGIDPSPLFLCQFEAIRHFAGNDQRAHLLPLGIQELPELRAFDTVFSMGVLYHRKSPIEHIEQLRNQLKDDGELVLETLVIDGGVNDVLVPTDRYGKMRNVWFIPSSAALKLWVERCGFTDVRIVDENMTSTDEQRRTDWMINESLSDYLDPTNPALTVEGHPAPKRAVLIARKAKD.

Residues K91, W105, K110, G130, 152–154 (DPS), M196, Y200, and R315 contribute to the carboxy-S-adenosyl-L-methionine site.

It belongs to the class I-like SAM-binding methyltransferase superfamily. CmoB family. As to quaternary structure, homotetramer.

It catalyses the reaction carboxy-S-adenosyl-L-methionine + 5-hydroxyuridine(34) in tRNA = 5-carboxymethoxyuridine(34) in tRNA + S-adenosyl-L-homocysteine + H(+). Functionally, catalyzes carboxymethyl transfer from carboxy-S-adenosyl-L-methionine (Cx-SAM) to 5-hydroxyuridine (ho5U) to form 5-carboxymethoxyuridine (cmo5U) at position 34 in tRNAs. The chain is tRNA U34 carboxymethyltransferase from Aeromonas hydrophila subsp. hydrophila (strain ATCC 7966 / DSM 30187 / BCRC 13018 / CCUG 14551 / JCM 1027 / KCTC 2358 / NCIMB 9240 / NCTC 8049).